A 334-amino-acid chain; its full sequence is Beta-hexosaminidase (334 aa).

Residues aspartate 62, arginine 70, arginine 131, and 161–162 (KH) each bind substrate. The active-site Proton donor/acceptor is the histidine 174. Aspartate 246 acts as the Nucleophile in catalysis.

The protein belongs to the glycosyl hydrolase 3 family. NagZ subfamily.

It localises to the cytoplasm. It carries out the reaction Hydrolysis of terminal non-reducing N-acetyl-D-hexosamine residues in N-acetyl-beta-D-hexosaminides.. It participates in cell wall biogenesis; peptidoglycan recycling. Functionally, plays a role in peptidoglycan recycling by cleaving the terminal beta-1,4-linked N-acetylglucosamine (GlcNAc) from peptide-linked peptidoglycan fragments, giving rise to free GlcNAc, anhydro-N-acetylmuramic acid and anhydro-N-acetylmuramic acid-linked peptides. The protein is Beta-hexosaminidase of Tolumonas auensis (strain DSM 9187 / NBRC 110442 / TA 4).